The sequence spans 160 residues: Protein max (160 aa).

Positions 1–13 (MSDNDDIEVESDE) are enriched in acidic residues. The interval 1 to 40 (MSDNDDIEVESDEEQPRFQSAADKRAHHNALERKRRDHIK) is disordered. Ser2 carries the post-translational modification N-acetylserine. Phosphoserine occurs at positions 2 and 11. A bHLH domain is found at 23-74 (DKRAHHNALERKRRDHIKDSFHSLRDSVPSLQGEKASRAQILDKATEYIQYM). The segment covering 29 to 40 (NALERKRRDHIK) has biased composition (basic and acidic residues). The residue at position 66 (Lys66) is an N6-acetyllysine. Residues 81–102 (HQQDIDDLKRQNALLEQQVRAL) are leucine-zipper. Residues 103-160 (EKARSSAQLQTNYPSSDNSLYTNAKGSTISAFDGGSDSSSESEPEEPQSRKKLRMEAS) are disordered. The residue at position 107 (Ser107) is a Phosphoserine. Residues 107 to 132 (SSAQLQTNYPSSDNSLYTNAKGSTIS) show a composition bias toward polar residues. The short motif at 152 to 156 (RKKLR) is the Nuclear localization signal element. An N6-acetyllysine mark is found at Lys153 and Lys154.

It belongs to the MAX family. Efficient DNA binding requires dimerization with another bHLH protein. Binds DNA as a heterodimer with MYC or MAD. Part of the E2F6.com-1 complex in G0 phase composed of E2F6, MGA, MAX, TFDP1, CBX3, BAT8, EUHMTASE1, RING1, RNF2, MBLR, L3MBTL2 and YAF2. Component of some MLL1/MLL complex, at least composed of the core components KMT2A/MLL1, ASH2L, HCFC1/HCF1, WDR5 and RBBP5, as well as the facultative components BACC1, CHD8, E2F6, HSP70, INO80C, KANSL1, LAS1L, MAX, MCRS1, MGA, MYST1/MOF, PELP1, PHF20, PRP31, RING2, RUVB1/TIP49A, RUVB2/TIP49B, SENP3, TAF1, TAF4, TAF6, TAF7, TAF9 and TEX10. Interacts with SPAG9. The heterodimer MYC:MAX interacts with ABI1; the interaction may enhance MYC:MAX transcriptional activity. Post-translationally, reversible lysine acetylation might regulate the nuclear-cytoplasmic shuttling of specific Max complexes. As to expression, high levels found in the brain, heart and lung while lower levels are seen in the liver, kidney and skeletal muscle.

It is found in the nucleus. The protein localises to the cell projection. The protein resides in the dendrite. In terms of biological role, transcription regulator. Forms a sequence-specific DNA-binding protein complex with MYC or MAD which recognizes the core sequence 5'-CAC[GA]TG-3'. The MYC:MAX complex is a transcriptional activator, whereas the MAD:MAX complex is a repressor. May repress transcription via the recruitment of a chromatin remodeling complex containing H3 'Lys-9' histone methyltransferase activity. Represses MYC transcriptional activity from E-box elements. The chain is Protein max from Homo sapiens (Human).